Consider the following 461-residue polypeptide: Ribulose bisphosphate carboxylase (461 aa).

Asparagine 112 contributes to the substrate binding site. Lysine 167 acts as the Proton acceptor in catalysis. Lysine 169 provides a ligand contact to substrate. Mg(2+)-binding residues include lysine 192, aspartate 194, and glutamate 195. Lysine 192 is subject to N6-carboxylysine. Histidine 288 (proton acceptor) is an active-site residue. 3 residues coordinate substrate: arginine 289, histidine 322, and serine 369.

The protein belongs to the RuBisCO large chain family. Type II subfamily. Homodimer. Requires Mg(2+) as cofactor.

It catalyses the reaction 2 (2R)-3-phosphoglycerate + 2 H(+) = D-ribulose 1,5-bisphosphate + CO2 + H2O. It carries out the reaction D-ribulose 1,5-bisphosphate + O2 = 2-phosphoglycolate + (2R)-3-phosphoglycerate + 2 H(+). In terms of biological role, ruBisCO catalyzes two reactions: the carboxylation of D-ribulose 1,5-bisphosphate, the primary event in carbon dioxide fixation, as well as the oxidative fragmentation of the pentose substrate. Both reactions occur simultaneously and in competition at the same active site. This chain is Ribulose bisphosphate carboxylase, found in Rhodopseudomonas palustris (strain BisB18).